Here is a 469-residue protein sequence, read N- to C-terminus: SVGFKAGVKEYKLTYYTPEYQTKDTDILAAFRVTPQPGVPPEEAGAAVRAESSTGTWTTVWTDGLTSLDRYKGRCYHXEAVLGEEDQYIAYVAYPLDLFEEGSVTNMFTSIVGNVFGFKALRALRLEDLRIPNAYIKTFQGPPHGIQVERDKLNKYGRPLLGCTIKPKLGLSAKNYGRAVYECLRGGLDFTKDDENVNSQPFMRWRDRFLFCAEAIYKAQAETGEIKGHYLNATAGTCEEMIKRAVFARELGVPIVMHDYLTGGFTANTSLAHYCRDNGLLLHIHRAMHAVIDRQKNHGMHFRVLAKALRLSGGDHIHAGTVVGKLEGERDITLGFVDLLRDDFIEKDRSRGIYFTQDWVSLPGVXPVASGGIHVWHMPALTEIFGDDXRXQFGGGTLGHPWGNAPGAVANRVALEACVKARNEGRDLAVEGNEIIREASKWSPELAAACEVWKEIRFNFKAVDTLDPS.

An N6,N6,N6-trimethyllysine modification is found at K5. Substrate-binding residues include N114 and T164. The Proton acceptor role is filled by K166. Substrate is bound at residue K168. K192, D194, and E195 together coordinate Mg(2+). K192 carries the post-translational modification N6-carboxylysine. H285 functions as the Proton acceptor in the catalytic mechanism. Residues R286, H318, and S370 each coordinate substrate.

This sequence belongs to the RuBisCO large chain family. Type I subfamily. As to quaternary structure, heterohexadecamer of 8 large chains and 8 small chains; disulfide-linked. The disulfide link is formed within the large subunit homodimers. It depends on Mg(2+) as a cofactor. In terms of processing, the disulfide bond which can form in the large chain dimeric partners within the hexadecamer appears to be associated with oxidative stress and protein turnover.

Its subcellular location is the plastid. The protein localises to the chloroplast. It catalyses the reaction 2 (2R)-3-phosphoglycerate + 2 H(+) = D-ribulose 1,5-bisphosphate + CO2 + H2O. The catalysed reaction is D-ribulose 1,5-bisphosphate + O2 = 2-phosphoglycolate + (2R)-3-phosphoglycerate + 2 H(+). RuBisCO catalyzes two reactions: the carboxylation of D-ribulose 1,5-bisphosphate, the primary event in carbon dioxide fixation, as well as the oxidative fragmentation of the pentose substrate in the photorespiration process. Both reactions occur simultaneously and in competition at the same active site. This chain is Ribulose bisphosphate carboxylase large chain, found in Antirhea lucida (Palo iloron).